The chain runs to 281 residues: Tumor necrosis factor ligand superfamily member 10 (281 aa).

Residues 1–17 (MAMMEVQGGPSLGQTCV) are Cytoplasmic-facing. A helical; Signal-anchor for type II membrane protein membrane pass occupies residues 18–38 (LIVIFTVLLQSLCVAVTYVYF). The Extracellular portion of the chain corresponds to 39–281 (TNELKQMQDK…ASFFGAFLVG (243 aa)). Residues 122-280 (VAAHITGTRG…EASFFGAFLV (159 aa)) enclose the THD domain. The interval 124 to 144 (AHITGTRGRSNTLSSPNSKNE) is disordered. Residues 130–141 (RGRSNTLSSPNS) are compositionally biased toward polar residues. Cysteine 230 contacts Zn(2+).

The protein belongs to the tumor necrosis factor family. In terms of assembly, homotrimer. One TNFSF10 homotrimer interacts with three TNFSF10A mononers. One TNFSF10 homotrimer interacts with three TNFSF10B mononers. In terms of processing, tyrosine phosphorylated by PKDCC/VLK. In terms of tissue distribution, widespread; most predominant in spleen, lung and prostate.

The protein resides in the cell membrane. It is found in the secreted. Its function is as follows. Cytokine that binds to TNFRSF10A/TRAILR1, TNFRSF10B/TRAILR2, TNFRSF10C/TRAILR3, TNFRSF10D/TRAILR4 and possibly also to TNFRSF11B/OPG. Induces apoptosis. Its activity may be modulated by binding to the decoy receptors TNFRSF10C/TRAILR3, TNFRSF10D/TRAILR4 and TNFRSF11B/OPG that cannot induce apoptosis. The protein is Tumor necrosis factor ligand superfamily member 10 (TNFSF10) of Homo sapiens (Human).